The chain runs to 443 residues: Ribosomal protein uS12 methylthiotransferase RimO (443 aa).

The region spanning 5 to 115 (PNIGFISLGC…VMKHVHKYVP (111 aa)) is the MTTase N-terminal domain. Residues Cys-14, Cys-50, Cys-79, Cys-147, Cys-151, and Cys-154 each coordinate [4Fe-4S] cluster. Residues 133-374 (LTPKHYAYLK…MQVQQRISAA (242 aa)) form the Radical SAM core domain. The 67-residue stretch at 377–443 (QQKVGKTLAV…ADEYDLWGTC (67 aa)) folds into the TRAM domain.

Belongs to the methylthiotransferase family. RimO subfamily. [4Fe-4S] cluster is required as a cofactor.

The protein resides in the cytoplasm. It catalyses the reaction L-aspartate(89)-[ribosomal protein uS12]-hydrogen + (sulfur carrier)-SH + AH2 + 2 S-adenosyl-L-methionine = 3-methylsulfanyl-L-aspartate(89)-[ribosomal protein uS12]-hydrogen + (sulfur carrier)-H + 5'-deoxyadenosine + L-methionine + A + S-adenosyl-L-homocysteine + 2 H(+). Its function is as follows. Catalyzes the methylthiolation of an aspartic acid residue of ribosomal protein uS12. This chain is Ribosomal protein uS12 methylthiotransferase RimO, found in Actinobacillus pleuropneumoniae serotype 7 (strain AP76).